Consider the following 230-residue polypeptide: Ribosomal RNA small subunit methyltransferase G (230 aa).

Residues Gly93, Leu98, 144 to 145, and Arg158 contribute to the S-adenosyl-L-methionine site; that span reads IE.

Belongs to the methyltransferase superfamily. RNA methyltransferase RsmG family.

It localises to the cytoplasm. It carries out the reaction guanosine(527) in 16S rRNA + S-adenosyl-L-methionine = N(7)-methylguanosine(527) in 16S rRNA + S-adenosyl-L-homocysteine. Its function is as follows. Specifically methylates the N7 position of guanine in position 527 of 16S rRNA. The protein is Ribosomal RNA small subunit methyltransferase G of Bordetella parapertussis (strain 12822 / ATCC BAA-587 / NCTC 13253).